A 166-amino-acid chain; its full sequence is UPF0561 protein C2orf68 (166 aa).

Residues 32–107 (NQIARDDYDK…SELEPSGHQL (76 aa)) are disordered. 2 stretches are compositionally biased toward basic and acidic residues: residues 34-49 (IARDDYDKKVKQAAKE) and 73-85 (RHRDVSAHPRNPD). A compositionally biased stretch (low complexity) spans 91 to 104 (ESSSSGGSELEPSG).

It belongs to the UPF0561 family.

This chain is UPF0561 protein C2orf68 (C2orf68), found in Homo sapiens (Human).